The primary structure comprises 475 residues: 3-isopropylmalate dehydratase large subunit (475 aa).

Residues C353, C414, and C417 each coordinate [4Fe-4S] cluster.

Belongs to the aconitase/IPM isomerase family. LeuC type 1 subfamily. Heterodimer of LeuC and LeuD. Requires [4Fe-4S] cluster as cofactor.

The catalysed reaction is (2R,3S)-3-isopropylmalate = (2S)-2-isopropylmalate. Its pathway is amino-acid biosynthesis; L-leucine biosynthesis; L-leucine from 3-methyl-2-oxobutanoate: step 2/4. In terms of biological role, catalyzes the isomerization between 2-isopropylmalate and 3-isopropylmalate, via the formation of 2-isopropylmaleate. In Marinomonas sp. (strain MWYL1), this protein is 3-isopropylmalate dehydratase large subunit.